The following is a 71-amino-acid chain: Dermonecrotic toxin LgSicTox-alphaI-Loxn-A (71 aa).

The active site involves His-12. Positions 32, 34, and 48 each coordinate Mg(2+).

Mg(2+) is required as a cofactor. Post-translationally, contains 2 disulfide bonds. Expressed by the venom gland.

The protein resides in the secreted. The enzyme catalyses an N-(acyl)-sphingosylphosphocholine = an N-(acyl)-sphingosyl-1,3-cyclic phosphate + choline. It catalyses the reaction an N-(acyl)-sphingosylphosphoethanolamine = an N-(acyl)-sphingosyl-1,3-cyclic phosphate + ethanolamine. The catalysed reaction is a 1-acyl-sn-glycero-3-phosphocholine = a 1-acyl-sn-glycero-2,3-cyclic phosphate + choline. It carries out the reaction a 1-acyl-sn-glycero-3-phosphoethanolamine = a 1-acyl-sn-glycero-2,3-cyclic phosphate + ethanolamine. Its function is as follows. Catalyzes the hydrolysis of sphingomyelin. May also act on other phosphatidyl esters. Functionally, dermonecrotic toxins cleave the phosphodiester linkage between the phosphate and headgroup of certain phospholipids (sphingolipid and lysolipid substrates), forming an alcohol (often choline) and a cyclic phosphate. This toxin acts on sphingomyelin (SM). It may also act on ceramide phosphoethanolamine (CPE), lysophosphatidylcholine (LPC) and lysophosphatidylethanolamine (LPE), but not on lysophosphatidylserine (LPS), and lysophosphatidylglycerol (LPG). It acts by transphosphatidylation, releasing exclusively cyclic phosphate products as second products. In vivo, induces dermonecrosis, but is not lethal. Induces hemolysis, vascular permeability, edema, inflammatory response, and platelet aggregation. The protein is Dermonecrotic toxin LgSicTox-alphaI-Loxn-A of Loxosceles gaucho (Spider).